A 667-amino-acid chain; its full sequence is Probable sulfate permease C320.05 (667 aa).

The tract at residues 1-27 is disordered; that stretch reads MSSPSENHLLGPKTSFIDNRTSTSRPL. Positions 16 to 25 are enriched in polar residues; the sequence is FIDNRTSTSR. 12 helical membrane-spanning segments follow: residues 77–97, 102–122, 162–182, 198–218, 240–260, 275–295, 301–321, 336–356, 368–388, 405–425, 433–453, and 465–485; these read IIWDVLAGCSTACLSVPIALS, FLGVPPIYILTGTAIGPILYC, ILVTGLIAFIAGIINLAAGLF, GCILSISMIIMINQGSVFFGF, MSKANIYTTILSCITISLLIG, IVSIPDAVIILLLGSFLSKKF, YGIAILGEIKTTILLPKLPLP, GVMCSFLAFIDTVIAVKAISL, LISLGAANIGSSLFCGLPICG, VATIACSVLILLATFFIMPVF, LASMVVSLGVSLFADAAVEIF, and GIIFSIATCTMMFGLETGIIF. In terms of domain architecture, STAS spans 532 to 657; that stretch reads SSTAVESAPR…DHVQDSIKKV (126 aa).

Belongs to the SLC26A/SulP transporter (TC 2.A.53) family.

The protein resides in the endoplasmic reticulum membrane. Possible sulfate transporter. The polypeptide is Probable sulfate permease C320.05 (Schizosaccharomyces pombe (strain 972 / ATCC 24843) (Fission yeast)).